The sequence spans 421 residues: Ribulose bisphosphate carboxylase large chain (421 aa).

Asparagine 68 and threonine 118 together coordinate substrate. The Proton acceptor role is filled by lysine 120. Lysine 122 lines the substrate pocket. Residues lysine 146, aspartate 148, and glutamate 149 each contribute to the Mg(2+) site. An N6-carboxylysine modification is found at lysine 146. Residue histidine 239 is the Proton acceptor of the active site. 3 residues coordinate substrate: arginine 240, histidine 272, and serine 324.

The protein belongs to the RuBisCO large chain family. Type I subfamily. As to quaternary structure, heterohexadecamer of 8 large chains and 8 small chains; disulfide-linked. The disulfide link is formed within the large subunit homodimers. The cofactor is Mg(2+). Post-translationally, the disulfide bond which can form in the large chain dimeric partners within the hexadecamer appears to be associated with oxidative stress and protein turnover.

Its subcellular location is the plastid. The protein resides in the chloroplast. It carries out the reaction 2 (2R)-3-phosphoglycerate + 2 H(+) = D-ribulose 1,5-bisphosphate + CO2 + H2O. It catalyses the reaction D-ribulose 1,5-bisphosphate + O2 = 2-phosphoglycolate + (2R)-3-phosphoglycerate + 2 H(+). Functionally, ruBisCO catalyzes two reactions: the carboxylation of D-ribulose 1,5-bisphosphate, the primary event in carbon dioxide fixation, as well as the oxidative fragmentation of the pentose substrate in the photorespiration process. Both reactions occur simultaneously and in competition at the same active site. The chain is Ribulose bisphosphate carboxylase large chain (rbcL) from Aegilops tauschii (Tausch's goatgrass).